The primary structure comprises 293 residues: Aquaporin-6 (293 aa).

Over 1–22 the chain is Cytoplasmic; that stretch reads MEPGLCSRAYLLVGGLWTAISK. A helical transmembrane segment spans residues 23–43; it reads ALFAEFLATGLYVFFGVGSVL. Residues 44–51 lie on the Extracellular side of the membrane; it reads PWPVALPS. The helical transmembrane segment at 52 to 70 threads the bilayer; that stretch reads VLQIAITFNLATATAVQIS. At 71-75 the chain is on the cytoplasmic side; sequence WKTSG. Residues 76 to 85 constitute an intramembrane region (discontinuously helical); it reads AHANPAVTLA. Positions 79–81 match the NPA 1 motif; sequence NPA. At 86–96 the chain is on the cytoplasmic side; sequence YLVGSHISLPR. The chain crosses the membrane as a helical span at residues 97–118; that stretch reads AMAYIAAQLAGATAGAALLYGV. The Extracellular portion of the chain corresponds to 119 to 138; that stretch reads TPGGIRETLGVNVVHNSTST. The N-linked (GlcNAc...) asparagine glycan is linked to Asn134. The chain crosses the membrane as a helical span at residues 139-159; it reads GQAVAVELVLTLQLVLCVFAS. At 160–165 the chain is on the cytoplasmic side; sequence MDGRQT. A helical membrane pass occupies residues 166 to 185; sequence LASPAAMIGTSVALGHLIGI. At 186–189 the chain is on the extracellular side; that stretch reads YFTG. Residues 190-202 constitute an intramembrane region (discontinuously helical); that stretch reads CSMNPARSFGPAV. The NPA 2 motif lies at 193-195; sequence NPA. Topologically, residues 203–210 are extracellular; that stretch reads IVGKFAVH. The chain crosses the membrane as a helical span at residues 211–231; that stretch reads WIFWVGPLTGAVLASLIYNFI. Residues 232–293 are Cytoplasmic-facing; the sequence is LFPDTKTVAQ…RSFSFTLGLC (62 aa).

It belongs to the MIP/aquaporin (TC 1.A.8) family. In terms of assembly, homotetramer; each monomer provides an independent solute pore.

It is found in the cytoplasmic vesicle membrane. The enzyme catalyses nitrate(in) = nitrate(out). It carries out the reaction iodide(out) = iodide(in). It catalyses the reaction bromide(in) = bromide(out). The catalysed reaction is chloride(in) = chloride(out). The enzyme catalyses Na(+)(in) = Na(+)(out). It carries out the reaction H2O(in) = H2O(out). It catalyses the reaction CO2(out) = CO2(in). The catalysed reaction is NH4(+)(in) = NH4(+)(out). In terms of biological role, aquaporins form homotetrameric transmembrane channels, with each monomer independently mediating water transport across the plasma membrane along its osmotic gradient. Unlike classical aquaporins, AQP6 is an intracellular channel with selective anion permeability, particularly for nitrate, and exhibits very low water permeability. It may also facilitate the transport of gases, such as CO2 and NH4(+), as demonstrated in vitro. This Mus musculus (Mouse) protein is Aquaporin-6.